The chain runs to 344 residues: tRNA(Ile)-lysidine synthase (344 aa).

43 to 48 (SGGADS) is a binding site for ATP.

It belongs to the tRNA(Ile)-lysidine synthase family.

The protein localises to the cytoplasm. It carries out the reaction cytidine(34) in tRNA(Ile2) + L-lysine + ATP = lysidine(34) in tRNA(Ile2) + AMP + diphosphate + H(+). In terms of biological role, ligates lysine onto the cytidine present at position 34 of the AUA codon-specific tRNA(Ile) that contains the anticodon CAU, in an ATP-dependent manner. Cytidine is converted to lysidine, thus changing the amino acid specificity of the tRNA from methionine to isoleucine. The protein is tRNA(Ile)-lysidine synthase of Bordetella parapertussis (strain 12822 / ATCC BAA-587 / NCTC 13253).